Here is a 168-residue protein sequence, read N- to C-terminus: Dual-action ribosomal maturation protein DarP (168 aa).

It belongs to the DarP family.

The protein localises to the cytoplasm. In terms of biological role, member of a network of 50S ribosomal subunit biogenesis factors which assembles along the 30S-50S interface, preventing incorrect 23S rRNA structures from forming. Promotes peptidyl transferase center (PTC) maturation. This is Dual-action ribosomal maturation protein DarP from Neisseria meningitidis serogroup B (strain ATCC BAA-335 / MC58).